Consider the following 423-residue polypeptide: uncharacterized protein (423 aa).

A BON domain is found at 75 to 145; the sequence is LHVVVTQPIA…PIVNNIKVAG (71 aa).

It belongs to the bacterial secretin family.

Its function is as follows. Involved in the secretion of an unknown compound. This is an uncharacterized protein from Sinorhizobium fredii (strain NBRC 101917 / NGR234).